Here is a 5430-residue protein sequence, read N- to C-terminus: Microtubule-actin cross-linking factor 1 (5430 aa).

The segment at 1 to 47 is disordered; the sequence is MSSSDEETLSERSCRSERSCRSERSYRSERSGSLSPCPPGDTLPWNL. The actin-binding stretch occupies residues 1–295; sequence MSSSDEETLS…VITYVSSIYD (295 aa). A Phosphoserine modification is found at S4. The segment covering 9–30 has biased composition (basic and acidic residues); it reads LSERSCRSERSCRSERSYRSER. S35 and S57 each carry phosphoserine. Calponin-homology (CH) domains follow at residues 78–181 and 194–298; these read RVQK…LHFQ and MSAK…DAFP. LRR repeat units lie at residues 148–171 and 240–264; these read QRQV…LTLG and LVDM…VAER. S280 is subject to Phosphoserine. 2 LRR repeats span residues 377 to 399 and 441 to 464; these read LYKL…YHPN and LNCE…LESG. One can recognise an SH3 domain in the interval 868-925; that stretch reads KSTLSVKAICDYRQIEITICKNDECVLEDNSQRTKWKVISPTGNEAMVPSVCLLIPPP. One copy of the LRR 5 repeat lies at 1050–1073; the sequence is ISELKNIRLRLEECEQRLLKQIQS. At S1122 the chain carries Phosphoserine. LRR repeat units follow at residues 1128-1154, 1187-1210, and 1257-1282; these read ATTL…VCLN, PADL…VKDK, and HRVI…DYRA. Residues S1367 and S1376 each carry the phosphoserine modification. 2 LRR repeats span residues 1579–1602 and 1629–1653; these read QQEL…IQNH and LTAL…TREA. 2 Spectrin repeats span residues 1816-1891 and 1933-2041; these read ELQK…NFEE and QYQQ…ALLQ. S1860 carries the post-translational modification Phosphoserine. The stretch at 1869 to 1891 is one LRR 11 repeat; that stretch reads KGDLRFVTISGQKVLETENNFEE. LRR repeat units follow at residues 2058–2083 and 2194–2220; these read LQSM…LIQE and IQEL…ALGS. One copy of the Spectrin 3 repeat lies at 2399–2507; the sequence is RMEEVQKEAS…TVARQKQLEE (109 aa). Phosphoserine is present on residues S2429 and S2454. LRR repeat units lie at residues 2444–2467, 2534–2557, and 2702–2725; these read KAFL…LAGL, GVLG…QFML, and KKRL…RMNR. Spectrin repeat units lie at residues 2733 to 2837 and 2842 to 2945; these read TQQF…SRLK and KAQK…SLEE. S2769 and S2895 each carry phosphoserine. LRR repeat units lie at residues 2984-3009, 3105-3127, and 3214-3237; these read NKNL…YLRD, NKIQ…MLEE, and KEQV…LIQS. Spectrin repeat units lie at residues 3169 to 3274, 3281 to 3383, 3388 to 3491, 3714 to 3818, 3825 to 3927, 4047 to 4152, 4157 to 4261, 4267 to 4370, 4375 to 4481, 4486 to 4589, 4594 to 4700, 4707 to 4808, and 4812 to 4916; these read EDFY…QLQE, KFQD…QLED, AKQF…SLLE, RSQQ…ARLE, NQFW…ALDE, LAEK…KLED, AVQY…HKLE, LGQF…QQLQ, QAQG…KLEE, ATEF…RSLD, RAKQ…KLEE, QFMD…RLEQ, and QAEE…QRLE. Position 3368 is a phosphothreonine (T3368). LRR repeat units lie at residues 3737–3761 and 3846–3870; these read MALG…AFSI and AQLP…QLRE. S4074 bears the Phosphoserine mark. K4252 carries the N6-acetyllysine modification. An LRR 22 repeat occupies 4538–4561; sequence RDQIIELDQTGNQLKFLSQKQDVV. The interval 4993 to 5023 is disordered; that stretch reads PTHAPFIEKSRSGSRKSLNQPTPPPMPILSQ. S5009 is modified (phosphoserine). 2 consecutive EF-hand domains span residues 5083 to 5118 and 5119 to 5154; these read HKKS…SKFP and TTKL…NKDA. 10 residues coordinate Ca(2+): D5096, D5098, D5100, K5102, E5107, D5132, D5134, D5136, Y5138, and E5143. The GAR domain occupies 5159-5231; it reads TDADKIEDEV…EFLVKNDPCR (73 aa). The C-terminal tail stretch occupies residues 5159–5430; that stretch reads TDADKIEDEV…ASPRTPCPKR (272 aa). A disordered region spans residues 5247–5430; that stretch reads PEGASQGMTP…ASPRTPCPKR (184 aa). Low complexity predominate over residues 5267 to 5301; it reads SSRAASPTRSSSSASQSNHSCTSMPSSPATPASGT. T5296 is modified (phosphothreonine). Polar residues predominate over residues 5317–5341; it reads TFHSSRTSLAGDTSNSSSPASTGAK. S5321 and S5334 each carry phosphoserine. Over residues 5352 to 5366 the composition is skewed to low complexity; sequence SRPGSRAGSRAGSRA. A 4 X 4 AA tandem repeats of [GS]-S-R-[AR] region spans residues 5355-5370; it reads GSRAGSRAGSRASSRR. Residues S5372 and S5375 each carry the phosphoserine modification. The segment covering 5381–5391 has biased composition (polar residues); that stretch reads ETQSACSDTSE. Residues 5392–5403 are compositionally biased toward low complexity; sequence SSAAGGQGSSRR.

It belongs to the plakin or cytolinker family. As to quaternary structure, interacts with MAPRE1, CLASP1, CLASP2 and GOLGA4. Interacts with AXIN1 and LRP6. Found in a complex composed of MACF1, APC; AXIN1, CTNNB1 and GSK3B. Interacts with CAMSAP3. In terms of processing, phosphorylated on serine residues in the C-terminal tail by GSK3B. Phosphorylation inhibits microtubule-binding and this plays a critical role in bulge stem cell migration and skin wound repair. Wnt-signaling can repress phosphorylation.

Its subcellular location is the cytoplasm. The protein localises to the cytoskeleton. It localises to the golgi apparatus. It is found in the cell membrane. The protein resides in the cell projection. Its subcellular location is the ruffle membrane. The protein localises to the membrane. In terms of biological role, F-actin-binding protein which plays a role in cross-linking actin to other cytoskeletal proteins and also binds to microtubules. Plays an important role in ERBB2-dependent stabilization of microtubules at the cell cortex. Acts as a positive regulator of Wnt receptor signaling pathway and is involved in the translocation of AXIN1 and its associated complex (composed of APC, CTNNB1 and GSK3B) from the cytoplasm to the cell membrane. Has actin-regulated ATPase activity and is essential for controlling focal adhesions (FAs) assembly and dynamics. Interaction with CAMSAP3 at the minus ends of non-centrosomal microtubules tethers microtubules minus-ends to actin filaments, regulating focal adhesion size and cell migration. May play role in delivery of transport vesicles containing GPI-linked proteins from the trans-Golgi network through its interaction with GOLGA4. Plays a key role in wound healing and epidermal cell migration. Required for efficient upward migration of bulge cells in response to wounding and this function is primarily rooted in its ability to coordinate microtubule dynamics and polarize hair follicle stem cells. As a regulator of actin and microtubule arrangement and stabilization, it plays an essential role in neurite outgrowth, branching and spine formation during brain development. The protein is Microtubule-actin cross-linking factor 1 of Rattus norvegicus (Rat).